The following is a 330-amino-acid chain: Glycerol-3-phosphate dehydrogenase [NAD(P)+] (330 aa).

NADPH contacts are provided by S10, W11, R31, and K104. Sn-glycerol 3-phosphate-binding residues include K104, G131, and S133. A135 provides a ligand contact to NADPH. Residues K186, D239, S249, R250, and N251 each coordinate sn-glycerol 3-phosphate. Residue K186 is the Proton acceptor of the active site. An NADPH-binding site is contributed by R250. V274 and E276 together coordinate NADPH.

Belongs to the NAD-dependent glycerol-3-phosphate dehydrogenase family.

The protein resides in the cytoplasm. It carries out the reaction sn-glycerol 3-phosphate + NAD(+) = dihydroxyacetone phosphate + NADH + H(+). It catalyses the reaction sn-glycerol 3-phosphate + NADP(+) = dihydroxyacetone phosphate + NADPH + H(+). It functions in the pathway membrane lipid metabolism; glycerophospholipid metabolism. Catalyzes the reduction of the glycolytic intermediate dihydroxyacetone phosphate (DHAP) to sn-glycerol 3-phosphate (G3P), the key precursor for phospholipid synthesis. This chain is Glycerol-3-phosphate dehydrogenase [NAD(P)+], found in Thermoanaerobacter sp. (strain X514).